Consider the following 374-residue polypeptide: Queuine tRNA-ribosyltransferase (374 aa).

The active-site Proton acceptor is Asp-89. Substrate contacts are provided by residues 89–93 (DSGGF), Asp-143, Gln-187, and Gly-214. The RNA binding stretch occupies residues 245–251 (GVGKPED). The active-site Nucleophile is the Asp-264. The tract at residues 269–273 (TRNAR) is RNA binding; important for wobble base 34 recognition. Zn(2+)-binding residues include Cys-302, Cys-304, Cys-307, and His-333.

This sequence belongs to the queuine tRNA-ribosyltransferase family. Homodimer. Within each dimer, one monomer is responsible for RNA recognition and catalysis, while the other monomer binds to the replacement base PreQ1. Requires Zn(2+) as cofactor.

It catalyses the reaction 7-aminomethyl-7-carbaguanine + guanosine(34) in tRNA = 7-aminomethyl-7-carbaguanosine(34) in tRNA + guanine. Its pathway is tRNA modification; tRNA-queuosine biosynthesis. Catalyzes the base-exchange of a guanine (G) residue with the queuine precursor 7-aminomethyl-7-deazaguanine (PreQ1) at position 34 (anticodon wobble position) in tRNAs with GU(N) anticodons (tRNA-Asp, -Asn, -His and -Tyr). Catalysis occurs through a double-displacement mechanism. The nucleophile active site attacks the C1' of nucleotide 34 to detach the guanine base from the RNA, forming a covalent enzyme-RNA intermediate. The proton acceptor active site deprotonates the incoming PreQ1, allowing a nucleophilic attack on the C1' of the ribose to form the product. After dissociation, two additional enzymatic reactions on the tRNA convert PreQ1 to queuine (Q), resulting in the hypermodified nucleoside queuosine (7-(((4,5-cis-dihydroxy-2-cyclopenten-1-yl)amino)methyl)-7-deazaguanosine). In Shewanella baltica (strain OS223), this protein is Queuine tRNA-ribosyltransferase.